Consider the following 593-residue polypeptide: Adenine deaminase 2 (593 aa).

The protein belongs to the metallo-dependent hydrolases superfamily. Adenine deaminase family. It depends on Mn(2+) as a cofactor.

It carries out the reaction adenine + H2O + H(+) = hypoxanthine + NH4(+). This is Adenine deaminase 2 from Rhizobium meliloti (strain 1021) (Ensifer meliloti).